A 550-amino-acid chain; its full sequence is Parathyroid hormone 2 receptor (550 aa).

The first 24 residues, 1 to 24 (MAGLGASLHVWGWLMLGSCLLARA), serve as a signal peptide directing secretion. The Extracellular portion of the chain corresponds to 27–145 (DSDGTITIEE…GKQEFFERLY (119 aa)). 4 N-linked (GlcNAc...) asparagine glycosylation sites follow: N51, N106, N116, and N121. Residues 146 to 169 (VMYTVGYSISFGSLAVAILIIGYF) traverse the membrane as a helical segment. Over 170–176 (RRLHCTR) the chain is Cytoplasmic. Residues 177–196 (NYIHMHLFVSFMLRATSIFV) traverse the membrane as a helical segment. Residues 197–237 (KDRVVHAHIGVKELESLIMQDDPQNSIEATSVDKSQYIGCK) are Extracellular-facing. The helical transmembrane segment at 238–260 (IAVVMFIYFLATNYYWILVEGLY) threads the bilayer. Residues 261–275 (LHNLIFVAFFSDTKY) lie on the Cytoplasmic side of the membrane. A helical membrane pass occupies residues 276 to 297 (LWGFILIGWGFPAAFVAAWAVA). Over 298-316 (RATLADARCWELSAGDIKW) the chain is Extracellular. A helical transmembrane segment spans residues 317–337 (IYQAPILAAIGLNFILFLNTV). At 338 to 364 (RVLATKIWETNAVGHDTRKQYRKLAKS) the chain is on the cytoplasmic side. A helical membrane pass occupies residues 365–383 (TLVLVLVFGVHYIVFVCLP). The Extracellular segment spans residues 384–394 (HSFTGLGWEIR). The chain crosses the membrane as a helical span at residues 395 to 417 (MHCELFFNSFQGFFVSIIYCYCN). Residues 418 to 550 (GEVQAEVKKM…GCQGETEDVL (133 aa)) are Cytoplasmic-facing. A compositionally biased stretch (basic and acidic residues) spans 511 to 531 (EETKEDSGRQGDDILMEKPSR). Residues 511 to 550 (EETKEDSGRQGDDILMEKPSRPMESNPDTEGCQGETEDVL) are disordered.

The protein belongs to the G-protein coupled receptor 2 family. Binds to TIPF39/TIP39. Expressed abundantly in brain and pancreas. Also expressed in the testis.

The protein localises to the cell membrane. Its function is as follows. This is a specific receptor for parathyroid hormone. The activity of this receptor is mediated by G proteins which activate adenylyl cyclase. PTH2R may be responsible for PTH effects in a number of physiological systems. It may play a significant role in pancreatic function. PTH2R presence in neurons indicates that it may function as a neurotransmitter receptor. This Homo sapiens (Human) protein is Parathyroid hormone 2 receptor (PTH2R).